The chain runs to 149 residues: Putative prefoldin subunit alpha (149 aa).

Belongs to the prefoldin subunit alpha family.

The protein resides in the cytoplasm. Its function is as follows. Molecular chaperone capable of stabilizing a range of proteins. The protein is Putative prefoldin subunit alpha of Aquifex aeolicus (strain VF5).